The following is a 78-amino-acid chain: uncharacterized protein (78 aa).

This is an uncharacterized protein from Plasmodium falciparum (isolate fcm17 / Senegal).